The chain runs to 364 residues: PHD finger protein 6 (364 aa).

Ser2 carries the N-acetylserine modification. 2 consecutive short sequence motifs (nuclear localization signal) follow at residues 13–16 (RQRK) and 129–133 (RKHKK). The segment at 14–52 (QRKCGFCKSNRDKECGQLLISENQKVAAHHKCMLFSSAL) adopts a C2HC pre-PHD-type 1 zinc-finger fold. An extended PHD1 domain (ePHD1) region spans residues 14–132 (QRKCGFCKSN…IYMVYCRKHK (119 aa)). The PHD-type 1 zinc-finger motif lies at 80-132 (LMCSLCHCPGATIGCDVKTCHRTYHYHCALHDKAQIREKPSQGIYMVYCRKHK). Residues Ser138, Ser145, and Ser155 each carry the phosphoserine modification. The interval 139 to 211 (EADLEESFNE…RSSPNDTRPK (73 aa)) is disordered. The short motif at 157–169 (KTKKKSRKGRPRK) is the Nucleolar localization signal element. Residues 157-171 (KTKKKSRKGRPRKTN) are compositionally biased toward basic residues. Residue Lys173 forms a Glycyl lysine isopeptide (Lys-Gly) (interchain with G-Cter in SUMO2) linkage. 2 positions are modified to phosphoserine: Ser183 and Ser199. Residues 209–249 (RPKCGFCHVGEEENEARGKLHIFNAKKAAAHYKCMLFSSGT) form a C2HC pre-PHD-type 2 zinc finger. The extended PHD2 domain (ePHD2) stretch occupies residues 209–330 (RPKCGFCHVG…IYKLYCKNHS (122 aa)). Lys227 is covalently cross-linked (Glycyl lysine isopeptide (Lys-Gly) (interchain with G-Cter in SUMO2)). Residues 278–330 (MKCTLCSQPGATIGCEIKACVKTYHYHCGVQDKAKYIENMSRGIYKLYCKNHS) form a PHD-type 2 zinc finger. The segment at 330 to 364 (SGNDERDEEDEERESKSRGRVAIDQQLTQQQLNGN) is disordered. Residues 354 to 364 (QQLTQQQLNGN) are compositionally biased toward polar residues. Thr357 carries the phosphothreonine modification.

Interacts with UBTF. Interacts with the NuRD complex component RBBP4 (via the nucleolar localization motif), the interaction mediates transcriptional repression activity. As to expression, at 12.5 dpc it is highly expressed in the embryonic central nervous system and at lower levels in other tissues. Very low levels present throughout the adult brain.

Its subcellular location is the nucleus. The protein resides in the nucleolus. The protein localises to the chromosome. It localises to the centromere. It is found in the kinetochore. In terms of biological role, transcriptional regulator that associates with ribosomal RNA promoters and suppresses ribosomal RNA (rRNA) transcription. This chain is PHD finger protein 6 (Phf6), found in Mus musculus (Mouse).